The primary structure comprises 547 residues: Chaperonin GroEL (547 aa).

ATP contacts are provided by residues 30 to 33 (TLGP), K51, 87 to 91 (DGTTT), G415, 479 to 481 (NAA), and D495. Residues 526 to 547 (KKDEPTPPAAGGGMGGMGGMDF) form a disordered region. Gly residues predominate over residues 535 to 547 (AGGGMGGMGGMDF).

Belongs to the chaperonin (HSP60) family. In terms of assembly, forms a cylinder of 14 subunits composed of two heptameric rings stacked back-to-back. Interacts with the co-chaperonin GroES.

Its subcellular location is the cytoplasm. It carries out the reaction ATP + H2O + a folded polypeptide = ADP + phosphate + an unfolded polypeptide.. Functionally, together with its co-chaperonin GroES, plays an essential role in assisting protein folding. The GroEL-GroES system forms a nano-cage that allows encapsulation of the non-native substrate proteins and provides a physical environment optimized to promote and accelerate protein folding. This is Chaperonin GroEL from Xylella fastidiosa (strain M12).